The sequence spans 294 residues: ADP-ribosyl-[dinitrogen reductase] glycohydrolase (294 aa).

ADP-D-ribose is bound by residues 100–102 (NTC), Glu-121, His-158, and Tyr-212. Mn(2+) is bound by residues Asp-243, Asp-245, and Thr-246.

It belongs to the ADP-ribosylglycohydrolase family. In terms of assembly, monomer. Mn(2+) serves as cofactor.

It is found in the cytoplasm. It carries out the reaction N(omega)-alpha-(ADP-D-ribosyl)-L-arginyl-[dinitrogen reductase] + H2O = L-arginyl-[dinitrogen reductase] + ADP-D-ribose. Involved in the regulation of nitrogen fixation activity by the reversible ADP-ribosylation of one subunit of the homodimeric dinitrogenase reductase component of the nitrogenase enzyme complex. The ADP-ribosyltransferase (DraT) transfers the ADP-ribose group from NAD to dinitrogenase reductase. The ADP-ribose group is removed through the action of the ADP-ribosylglycohydrolase (DraG, this entry). This chain is ADP-ribosyl-[dinitrogen reductase] glycohydrolase, found in Rhodospirillum rubrum.